A 108-amino-acid chain; its full sequence is uncharacterized protein (108 aa).

An HTH cro/C1-type domain is found at 20 to 74; sequence VRQRRTALILDQETLARRIGVSFQQIQKYERGRNRISASRLYDIAKALAVPIDYF. Residues 31–50 constitute a DNA-binding region (H-T-H motif); that stretch reads QETLARRIGVSFQQIQKYER.

This is an uncharacterized protein from Rhodospirillum rubrum.